The following is a 364-amino-acid chain: Urease accessory protein UreD (364 aa).

Disordered stretches follow at residues 1 to 37 (MDQDRSGAADAGNPDPGRGPAGSAEARNGAAAASSPA) and 201 to 250 (PPEV…AGER). Composition is skewed to low complexity over residues 21–37 (AGSAEARNGAAAASSPA), 209–218 (APDRGAPAAE), and 236–248 (AASSGGTGAAPAG).

The protein belongs to the UreD family. In terms of assembly, ureD, UreF and UreG form a complex that acts as a GTP-hydrolysis-dependent molecular chaperone, activating the urease apoprotein by helping to assemble the nickel containing metallocenter of UreC. The UreE protein probably delivers the nickel.

It localises to the cytoplasm. Required for maturation of urease via the functional incorporation of the urease nickel metallocenter. This Kocuria rhizophila (strain ATCC 9341 / DSM 348 / NBRC 103217 / DC2201) protein is Urease accessory protein UreD.